The chain runs to 379 residues: tRNA (guanine(26)-N(2))-dimethyltransferase (379 aa).

Residues 1–26 (MECREITEGSTTFTAPVQDETTQFPP) are disordered. Residues 4–369 (REITEGSTTF…APLPLIEEKI (366 aa)) form the Trm1 methyltransferase domain. Residues 8-25 (EGSTTFTAPVQDETTQFP) are compositionally biased toward polar residues. Arg41, Arg66, Asp82, Asp108, and Ala109 together coordinate S-adenosyl-L-methionine. Zn(2+) is bound by residues Cys237, Cys240, Cys257, and Cys260.

Belongs to the class I-like SAM-binding methyltransferase superfamily. Trm1 family.

The enzyme catalyses guanosine(26) in tRNA + 2 S-adenosyl-L-methionine = N(2)-dimethylguanosine(26) in tRNA + 2 S-adenosyl-L-homocysteine + 2 H(+). In terms of biological role, dimethylates a single guanine residue at position 26 of a number of tRNAs using S-adenosyl-L-methionine as donor of the methyl groups. This is tRNA (guanine(26)-N(2))-dimethyltransferase from Methanocorpusculum labreanum (strain ATCC 43576 / DSM 4855 / Z).